The sequence spans 494 residues: Guanosine-5'-triphosphate,3'-diphosphate pyrophosphatase (494 aa).

It belongs to the GppA/Ppx family. GppA subfamily.

It carries out the reaction guanosine 3'-diphosphate 5'-triphosphate + H2O = guanosine 3',5'-bis(diphosphate) + phosphate + H(+). Its pathway is purine metabolism; ppGpp biosynthesis; ppGpp from GTP: step 2/2. In terms of biological role, catalyzes the conversion of pppGpp to ppGpp. Guanosine pentaphosphate (pppGpp) is a cytoplasmic signaling molecule which together with ppGpp controls the 'stringent response', an adaptive process that allows bacteria to respond to amino acid starvation, resulting in the coordinated regulation of numerous cellular activities. This is Guanosine-5'-triphosphate,3'-diphosphate pyrophosphatase from Citrobacter koseri (strain ATCC BAA-895 / CDC 4225-83 / SGSC4696).